The following is a 34-amino-acid chain: DDIT3 upstream open reading frame protein (34 aa).

In terms of assembly, interacts with DDIT3 (isoform 1).

Its subcellular location is the nucleus. The protein resides in the cytoplasm. Functionally, product of the upstream open reading frame (uORF) of DDIT3/CHOP that is specifically produced in absence of stress, thereby preventing translation of downstream stress effector DDIT3/CHOP. The sequence is that of DDIT3 upstream open reading frame protein from Homo sapiens (Human).